The following is a 430-amino-acid chain: Adenylosuccinate synthetase (430 aa).

GTP-binding positions include 12-18 (GDEGKGK) and 40-42 (GHT). Residue D13 is the Proton acceptor of the active site. Mg(2+) is bound by residues D13 and G40. Residues 13 to 16 (DEGK), 38 to 41 (NAGH), T128, R142, Q223, T238, and R302 each bind IMP. The Proton donor role is filled by H41. 298–304 (TTTGRPR) is a substrate binding site. GTP is bound by residues R304, 330 to 332 (SID), and 412 to 414 (SVG).

Belongs to the adenylosuccinate synthetase family. Homodimer. Mg(2+) is required as a cofactor.

It localises to the cytoplasm. It carries out the reaction IMP + L-aspartate + GTP = N(6)-(1,2-dicarboxyethyl)-AMP + GDP + phosphate + 2 H(+). The protein operates within purine metabolism; AMP biosynthesis via de novo pathway; AMP from IMP: step 1/2. In terms of biological role, plays an important role in the de novo pathway of purine nucleotide biosynthesis. Catalyzes the first committed step in the biosynthesis of AMP from IMP. This chain is Adenylosuccinate synthetase, found in Streptococcus gordonii (strain Challis / ATCC 35105 / BCRC 15272 / CH1 / DL1 / V288).